The chain runs to 118 residues: Small ribosomal subunit protein uS13 (118 aa).

Positions 93 to 118 (RGLPVRGQRTKTNARTRKGPRKPIRK) are disordered.

It belongs to the universal ribosomal protein uS13 family. As to quaternary structure, part of the 30S ribosomal subunit. Forms a loose heterodimer with protein S19. Forms two bridges to the 50S subunit in the 70S ribosome.

Located at the top of the head of the 30S subunit, it contacts several helices of the 16S rRNA. In the 70S ribosome it contacts the 23S rRNA (bridge B1a) and protein L5 of the 50S subunit (bridge B1b), connecting the 2 subunits; these bridges are implicated in subunit movement. Contacts the tRNAs in the A and P-sites. The sequence is that of Small ribosomal subunit protein uS13 from Pseudomonas fluorescens (strain Pf0-1).